Reading from the N-terminus, the 117-residue chain is Prefoldin subunit beta (117 aa).

Belongs to the prefoldin subunit beta family. In terms of assembly, heterohexamer of two alpha and four beta subunits.

It localises to the cytoplasm. Functionally, molecular chaperone capable of stabilizing a range of proteins. Seems to fulfill an ATP-independent, HSP70-like function in archaeal de novo protein folding. In Pyrococcus horikoshii (strain ATCC 700860 / DSM 12428 / JCM 9974 / NBRC 100139 / OT-3), this protein is Prefoldin subunit beta (pfdB).